Here is a 189-residue protein sequence, read N- to C-terminus: MQVILLQRVAKLGQMGEVVNVKDGYARNFLLPQGKALRANESNIKSFEARKAQLEAQNLETKKEAAAVAEKLDGQSFVVIRSASDSGALYGSVTTRDAAEAATEAGFTVGRGQIVLDRPIKDLGLHTVTVTLHPEVVVKITLNVARSVEEAELQASGKSIQELAAEAEAAADFEIAELFDEIGAASQED.

It belongs to the bacterial ribosomal protein bL9 family.

Its function is as follows. Binds to the 23S rRNA. This chain is Large ribosomal subunit protein bL9, found in Cereibacter sphaeroides (strain ATCC 17023 / DSM 158 / JCM 6121 / CCUG 31486 / LMG 2827 / NBRC 12203 / NCIMB 8253 / ATH 2.4.1.) (Rhodobacter sphaeroides).